Here is a 255-residue protein sequence, read N- to C-terminus: Putative cysteine-rich repeat secretory protein 27 (255 aa).

A signal peptide spans 1–26 (MISKFGSVHILAVVAIQLLIIPSVSS). Gnk2-homologous domains follow at residues 33–135 (YLHH…TINS) and 141–252 (YEND…LYPF).

The protein belongs to the cysteine-rich repeat secretory protein family.

Its subcellular location is the secreted. This is Putative cysteine-rich repeat secretory protein 27 (CRRSP27) from Arabidopsis thaliana (Mouse-ear cress).